Here is a 406-residue protein sequence, read N- to C-terminus: Succinylornithine transaminase (406 aa).

The residue at position 252 (Lys-252) is an N6-(pyridoxal phosphate)lysine.

Belongs to the class-III pyridoxal-phosphate-dependent aminotransferase family. AstC subfamily. Pyridoxal 5'-phosphate serves as cofactor.

The catalysed reaction is N(2)-succinyl-L-ornithine + 2-oxoglutarate = N-succinyl-L-glutamate 5-semialdehyde + L-glutamate. It participates in amino-acid degradation; L-arginine degradation via AST pathway; L-glutamate and succinate from L-arginine: step 3/5. Functionally, catalyzes the transamination of N(2)-succinylornithine and alpha-ketoglutarate into N(2)-succinylglutamate semialdehyde and glutamate. Can also act as an acetylornithine aminotransferase. The sequence is that of Succinylornithine transaminase from Escherichia fergusonii (strain ATCC 35469 / DSM 13698 / CCUG 18766 / IAM 14443 / JCM 21226 / LMG 7866 / NBRC 102419 / NCTC 12128 / CDC 0568-73).